Reading from the N-terminus, the 195-residue chain is ATP-dependent Clp protease proteolytic subunit (195 aa).

The active-site Nucleophile is the Ser-96. Residue His-121 is part of the active site.

Belongs to the peptidase S14 family. As to quaternary structure, fourteen ClpP subunits assemble into 2 heptameric rings which stack back to back to give a disk-like structure with a central cavity, resembling the structure of eukaryotic proteasomes.

Its subcellular location is the cytoplasm. The enzyme catalyses Hydrolysis of proteins to small peptides in the presence of ATP and magnesium. alpha-casein is the usual test substrate. In the absence of ATP, only oligopeptides shorter than five residues are hydrolyzed (such as succinyl-Leu-Tyr-|-NHMec, and Leu-Tyr-Leu-|-Tyr-Trp, in which cleavage of the -Tyr-|-Leu- and -Tyr-|-Trp bonds also occurs).. Cleaves peptides in various proteins in a process that requires ATP hydrolysis. Has a chymotrypsin-like activity. Plays a major role in the degradation of misfolded proteins. The protein is ATP-dependent Clp protease proteolytic subunit of Elusimicrobium minutum (strain Pei191).